The following is a 30-amino-acid chain: 136 kDa hydroxyproline-rich cell wall glycoprotein, major component (30 aa).

13 positions are modified to 4-hydroxyproline: Pro8, Pro9, Pro10, Pro11, Pro12, Pro17, Pro18, Pro19, Pro20, Pro26, Pro27, Pro28, and Pro29.

Post-translationally, O-glycosylated.

The protein resides in the secreted. Its subcellular location is the cell wall. This chain is 136 kDa hydroxyproline-rich cell wall glycoprotein, major component, found in Phaseolus vulgaris (Kidney bean).